Reading from the N-terminus, the 178-residue chain is MQLVNTRYAEALIDVTEEKNSTDKVLNNLVQVLKLLEENREFYSFLLDPQIQKESRKEAIIKVFEGRIEQEVVNFLMLLVDKERFENIRGIVEEYFRLADERKNILNMTIISAFPLEDVQINRIKEKYKKLYNKTDVKAKLIIDKSLIGGVKIQIGDKVIDDSIKGRLLCLKEALLQR.

The protein belongs to the ATPase delta chain family. As to quaternary structure, F-type ATPases have 2 components, F(1) - the catalytic core - and F(0) - the membrane proton channel. F(1) has five subunits: alpha(3), beta(3), gamma(1), delta(1), epsilon(1). F(0) has three main subunits: a(1), b(2) and c(10-14). The alpha and beta chains form an alternating ring which encloses part of the gamma chain. F(1) is attached to F(0) by a central stalk formed by the gamma and epsilon chains, while a peripheral stalk is formed by the delta and b chains.

It is found in the cell membrane. F(1)F(0) ATP synthase produces ATP from ADP in the presence of a proton or sodium gradient. F-type ATPases consist of two structural domains, F(1) containing the extramembraneous catalytic core and F(0) containing the membrane proton channel, linked together by a central stalk and a peripheral stalk. During catalysis, ATP synthesis in the catalytic domain of F(1) is coupled via a rotary mechanism of the central stalk subunits to proton translocation. Its function is as follows. This protein is part of the stalk that links CF(0) to CF(1). It either transmits conformational changes from CF(0) to CF(1) or is implicated in proton conduction. The protein is ATP synthase subunit delta of Acetivibrio thermocellus (strain ATCC 27405 / DSM 1237 / JCM 9322 / NBRC 103400 / NCIMB 10682 / NRRL B-4536 / VPI 7372) (Clostridium thermocellum).